The sequence spans 193 residues: ATP-dependent protease subunit HslV (193 aa).

The active site involves threonine 12. 3 residues coordinate Na(+): alanine 167, cysteine 170, and threonine 173.

Belongs to the peptidase T1B family. HslV subfamily. A double ring-shaped homohexamer of HslV is capped on each side by a ring-shaped HslU homohexamer. The assembly of the HslU/HslV complex is dependent on binding of ATP.

The protein localises to the cytoplasm. It carries out the reaction ATP-dependent cleavage of peptide bonds with broad specificity.. With respect to regulation, allosterically activated by HslU binding. Functionally, protease subunit of a proteasome-like degradation complex believed to be a general protein degrading machinery. This chain is ATP-dependent protease subunit HslV, found in Bartonella henselae (strain ATCC 49882 / DSM 28221 / CCUG 30454 / Houston 1) (Rochalimaea henselae).